The primary structure comprises 309 residues: 2-phospho-L-lactate transferase (309 aa).

Positions 50 and 89 each coordinate 7,8-didemethyl-8-hydroxy-5-deazariboflavin.

The protein belongs to the CofD family. As to quaternary structure, homodimer. The cofactor is Mg(2+).

The enzyme catalyses (2S)-lactyl-2-diphospho-5'-guanosine + 7,8-didemethyl-8-hydroxy-5-deazariboflavin = oxidized coenzyme F420-0 + GMP + H(+). Its pathway is cofactor biosynthesis; coenzyme F420 biosynthesis. Its function is as follows. Catalyzes the transfer of the 2-phospholactate moiety from (2S)-lactyl-2-diphospho-5'-guanosine to 7,8-didemethyl-8-hydroxy-5-deazariboflavin (FO) with the formation of oxidized coenzyme F420-0 and GMP. The chain is 2-phospho-L-lactate transferase from Methanococcus maripaludis (strain C6 / ATCC BAA-1332).